A 540-amino-acid chain; its full sequence is NADH-quinone oxidoreductase subunit N 1 (540 aa).

13 helical membrane-spanning segments follow: residues 11–31, 52–72, 109–129, 142–162, 195–215, 250–270, 284–306, 324–344, 352–372, 386–406, 431–451, 464–486, and 508–528; these read ILPELMLLLLGLLVLGSDVLT, AVGLGLVFIVGLVQSRFLFTV, FTMIARLTFIGAAFLTTLLAM, ALLIFSTLGMSIMAAATEFIL, FLFGSLSSAIFLYGISLTYGF, LILGMLFIIAGLGYKISVVPF, PVTAFLSTASKAAGFLLLYRLLT, WTSILAILALVTVIVGNLAAL, LLAYSSIGHAGFLLLAVLLWA, LIYYLIVYSLTNLGSFGVLAV, LMMTILILSLAGIPPLAGFWA, AVPLVTIAVIMTVVSLYYYLRFL, and AAIILSTVLVVLLGLLPNLIW.

The protein belongs to the complex I subunit 2 family. In terms of assembly, NDH-1 is composed of 14 different subunits. Subunits NuoA, H, J, K, L, M, N constitute the membrane sector of the complex.

It localises to the cell membrane. The enzyme catalyses a quinone + NADH + 5 H(+)(in) = a quinol + NAD(+) + 4 H(+)(out). Its function is as follows. NDH-1 shuttles electrons from NADH, via FMN and iron-sulfur (Fe-S) centers, to quinones in the respiratory chain. The immediate electron acceptor for the enzyme in this species is believed to be ubiquinone. Couples the redox reaction to proton translocation (for every two electrons transferred, four hydrogen ions are translocated across the cytoplasmic membrane), and thus conserves the redox energy in a proton gradient. This chain is NADH-quinone oxidoreductase subunit N 1, found in Roseiflexus castenholzii (strain DSM 13941 / HLO8).